Here is a 452-residue protein sequence, read N- to C-terminus: Probable phosphoglucosamine mutase (452 aa).

Residue S96 is the Phosphoserine intermediate of the active site. Residues S96, D235, D237, and D239 each coordinate Mg(2+). S96 is modified (phosphoserine).

Belongs to the phosphohexose mutase family. It depends on Mg(2+) as a cofactor. Activated by phosphorylation.

The catalysed reaction is alpha-D-glucosamine 1-phosphate = D-glucosamine 6-phosphate. Its function is as follows. Catalyzes the conversion of glucosamine-6-phosphate to glucosamine-1-phosphate. This is Probable phosphoglucosamine mutase from Methanopyrus kandleri (strain AV19 / DSM 6324 / JCM 9639 / NBRC 100938).